The sequence spans 372 residues: 3-isopropylmalate dehydrogenase (372 aa).

Residue 79-90 participates in NAD(+) binding; it reads GPKWQGGAVRPE. Positions 97, 107, 136, and 225 each coordinate substrate. Mg(2+) contacts are provided by aspartate 225, aspartate 250, and aspartate 254. 289–300 is an NAD(+) binding site; it reads GSAPDLPAGKAN.

Belongs to the isocitrate and isopropylmalate dehydrogenases family. As to quaternary structure, homodimer. Mg(2+) serves as cofactor. Mn(2+) is required as a cofactor.

The protein localises to the cytoplasm. It carries out the reaction (2R,3S)-3-isopropylmalate + NAD(+) = 4-methyl-2-oxopentanoate + CO2 + NADH. It participates in amino-acid biosynthesis; L-leucine biosynthesis; L-leucine from 3-methyl-2-oxobutanoate: step 3/4. Catalyzes the oxidation of 3-carboxy-2-hydroxy-4-methylpentanoate (3-isopropylmalate) to 3-carboxy-4-methyl-2-oxopentanoate. The product decarboxylates to 4-methyl-2 oxopentanoate. The chain is 3-isopropylmalate dehydrogenase (LEU2) from Eremothecium gossypii (strain ATCC 10895 / CBS 109.51 / FGSC 9923 / NRRL Y-1056) (Yeast).